Consider the following 1165-residue polypeptide: Chromosome partition protein Smc (1165 aa).

32–39 provides a ligand contact to ATP; sequence PNGSGKSN. The stretch at 161-503 forms a coiled coil; sequence AGVAEFDRKI…ETQRQVWREA (343 aa). Positions 518–630 constitute an SMC hinge domain; sequence QGVHGLISQL…VFRSLELARR (113 aa). Coiled-coil stretches lie at residues 672-901 and 946-1010; these read ELAE…LQQR and DLSL…DCDT.

Belongs to the SMC family. As to quaternary structure, homodimer.

The protein localises to the cytoplasm. In terms of biological role, required for chromosome condensation and partitioning. The protein is Chromosome partition protein Smc of Gloeobacter violaceus (strain ATCC 29082 / PCC 7421).